Reading from the N-terminus, the 63-residue chain is Jingdongin-1-MT1 (63 aa).

An N-terminal signal peptide occupies residues 1–22; sequence MFTLKKSLLLLFFLGTINLSLC. Positions 23 to 44 are cleaved as a propeptide — removed in mature form; that stretch reads EQERDADEEERRDDDEMDVEVE. Residues Cys57 and Cys63 are joined by a disulfide bond.

The protein belongs to the frog skin active peptide (FSAP) family. Brevinin subfamily. In terms of tissue distribution, expressed by the skin glands.

Its subcellular location is the secreted. Antimicrobial peptide. Active against some Gram-negative and a variety of Gram-positive bacterial strains. Active against fungus C.glabrata 090902 but not against C.neoformans 201211. Shows hemolytic activity against human erythrocytes. The sequence is that of Jingdongin-1-MT1 from Amolops mantzorum (Sichuan torrent frog).